Reading from the N-terminus, the 195-residue chain is Imidazoleglycerol-phosphate dehydratase (195 aa).

Belongs to the imidazoleglycerol-phosphate dehydratase family.

The protein resides in the cytoplasm. The enzyme catalyses D-erythro-1-(imidazol-4-yl)glycerol 3-phosphate = 3-(imidazol-4-yl)-2-oxopropyl phosphate + H2O. Its pathway is amino-acid biosynthesis; L-histidine biosynthesis; L-histidine from 5-phospho-alpha-D-ribose 1-diphosphate: step 6/9. The chain is Imidazoleglycerol-phosphate dehydratase from Paraburkholderia phymatum (strain DSM 17167 / CIP 108236 / LMG 21445 / STM815) (Burkholderia phymatum).